Reading from the N-terminus, the 465-residue chain is uncharacterized protein (465 aa).

The chain crosses the membrane as a helical span at residues 56-76; that stretch reads ILYMIIFAIFGLLPFLIALIF. The segment at 177–198 is disordered; the sequence is KFNKSKKSNKINDKTPILNNNN. Residues 273-293 traverse the membrane as a helical segment; that stretch reads LIFLLVSTILLIALIGFILII. Residues 411 to 449 form a disordered region; sequence NNYNNSNNNNNSNNSNSNNNNNNNNNNNNYNNNNYNNNN.

The protein resides in the membrane. This is an uncharacterized protein from Dictyostelium discoideum (Social amoeba).